The chain runs to 439 residues: MERIEFIDVVDIYVKAGDGGNGAVTFRREKYIPFGGPDGGDGGDGGYVFLVADTTLSTLYHLTEKKKYFAENAQNGRSRKQNGKNGADLVLRVPVGTIVKDYDTGEIIADLDEPGKYCCVARGGKGGRGNTHFKSSTNQAPKFAEQGAKGEEKHIQLELKLLADVGLIGYPNVGKSSIISKISNARPKIANYPFTTLVPNLGVVSINGTPETSFVVADIPGLIKGASEGKGLGNVFLKHVERCSVIVHVIDVSGSEGRDPIQDYFDIRKELEFFSKDLAKKRELIVGNKSDLLTPEEINAVKDRFLKEIGEGILLISAVTGQGINELKYAMWDIIKESKKMYVGTIDITKIEFEKPSPVRLVLPDRVDIKILKNDKGEFIVESEYIKSYLEKYKMEAKFMLEDVLDILQKNGLDEKLKKAGAKDGDTVWVEGVDFIFKE.

One can recognise an Obg domain in the interval 4 to 162 (IEFIDVVDIY…KHIQLELKLL (159 aa)). Positions 163–336 (ADVGLIGYPN…LKYAMWDIIK (174 aa)) constitute an OBG-type G domain. GTP contacts are provided by residues 169–176 (GYPNVGKS), 194–198 (FTTLV), 218–221 (DIPG), 288–291 (NKSD), and 317–319 (SAV). Residues serine 176 and threonine 196 each contribute to the Mg(2+) site. Residues 361–439 (LVLPDRVDIK…VEGVDFIFKE (79 aa)) form the OCT domain.

The protein belongs to the TRAFAC class OBG-HflX-like GTPase superfamily. OBG GTPase family. As to quaternary structure, monomer. Mg(2+) serves as cofactor.

Its subcellular location is the cytoplasm. An essential GTPase which binds GTP, GDP and possibly (p)ppGpp with moderate affinity, with high nucleotide exchange rates and a fairly low GTP hydrolysis rate. Plays a role in control of the cell cycle, stress response, ribosome biogenesis and in those bacteria that undergo differentiation, in morphogenesis control. The protein is GTPase Obg of Fervidobacterium nodosum (strain ATCC 35602 / DSM 5306 / Rt17-B1).